A 363-amino-acid polypeptide reads, in one-letter code: Heat-inducible transcription repressor HrcA (363 aa).

It belongs to the HrcA family.

Its function is as follows. Negative regulator of class I heat shock genes (grpE-dnaK-dnaJ and groELS operons). Prevents heat-shock induction of these operons. The polypeptide is Heat-inducible transcription repressor HrcA (Afipia carboxidovorans (strain ATCC 49405 / DSM 1227 / KCTC 32145 / OM5) (Oligotropha carboxidovorans)).